A 90-amino-acid polypeptide reads, in one-letter code: U7-theraphotoxin-Hhn1l (90 aa).

The signal sequence occupies residues 1–19 (MKTAIFTVVLALAVFAVLS). A propeptide spanning residues 20–50 (FGWEANEKALSEEFTELIHEKEAASETEARE) is cleaved from the precursor. 3 disulfides stabilise this stretch: Cys51-Cys65, Cys58-Cys70, and Cys64-Cys81.

It belongs to the neurotoxin 10 (Hwtx-1) family. 13 (Hntx-13) subfamily. Expressed by the venom gland.

It is found in the secreted. Functionally, ion channel inhibitor. This is U7-theraphotoxin-Hhn1l from Cyriopagopus hainanus (Chinese bird spider).